Here is a 357-residue protein sequence, read N- to C-terminus: Acidic fibroblast growth factor intracellular-binding protein (357 aa).

Thr2 is subject to N-acetylthreonine.

As to quaternary structure, binds to internalized FGF1; this interaction is increased in the presence of CSNKB, suggesting a possible cooperative interaction between CSNKB and FIBP in binding to FGF1.

Its subcellular location is the nucleus. The protein resides in the endomembrane system. Its function is as follows. May be involved in mitogenic function of FGF1. May mediate with IER2 FGF-signaling in the establishment of laterality in the embryo. The chain is Acidic fibroblast growth factor intracellular-binding protein (FIBP) from Chlorocebus aethiops (Green monkey).